Here is a 424-residue protein sequence, read N- to C-terminus: Inhibin beta A chain (424 aa).

Residues 1 to 20 (MPLLWLRGFLLASCWIIVRS) form the signal peptide. Positions 21–308 (SPTPGSGGHS…EEHPHRRRRR (288 aa)) are excised as a propeptide. A glycan (N-linked (GlcNAc...) asparagine) is linked at Asn-165. Disordered stretches follow at residues 178–197 (QQRR…DVGF) and 259–306 (KKKK…HRRR). Positions 188–197 (AGEEAEDVGF) are enriched in acidic residues. The span at 263–275 (KEEEAEGRKRDGE) shows a compositional bias: basic and acidic residues. 4 cysteine pairs are disulfide-bonded: Cys-312-Cys-320, Cys-319-Cys-389, Cys-348-Cys-421, and Cys-352-Cys-423.

It belongs to the TGF-beta family. In terms of assembly, dimeric, linked by one or more disulfide bonds. Inhibin A is a dimer of alpha/INHA and beta-A/INHBA. Activin A is a homodimer of beta-A/INHBA. Activin AB is a dimer of beta-A/INHBA and beta-B/INHBB. Interacts with FST and FSTL3; these interactions prevent activin A interaction to its type II receptor. Activin A interacts with ACVR2A. Activin A interacts with BMPR2. Inhibin A interacts with ACVR1; this interaction creates a non-signaling complex (NSC) that inhibits ACVR1-mediated BMP signaling. Inhibin A interacts with ACVR2A.

Its subcellular location is the secreted. Functionally, inhibins/activins are involved in regulating a number of diverse functions such as hypothalamic and pituitary hormone secretion, gonadal hormone secretion, germ cell development and maturation, erythroid differentiation, insulin secretion, nerve cell survival, embryonic axial development or bone growth, depending on their subunit composition. In terms of biological role, activin A is a homodimer of INHBA that plays a role in several essential biological processes including embryonic development, stem cell maintenance and differentiation, haematopoiesis, cell proliferation and tissue fibrosis. Signals through type I (such as ACVR1B or ACVR1C) and type II receptors (such as ACVR2A, ACVR2B or BMPR2) which, upon ligand binding, phosphorylate SMAD2 and SMAD3 intracellular signaling mediators that form a complex with SMAD4, translocate to the nucleus and modulate gene expression. Can also activate alternative non-canonical intracellular signaling pathways including the p38 MAPK, extracellular signal-regulated kinases 1/2 (ERK1/2) and c-Jun N-terminal kinases (JNKs) to modulate cell migration and differentiation. Alternatively, promotes osteoblastic differentiation via ACVRL1-SMAD1/5/9 pathway. In addition, can engage the type I receptor ACVR1 to form an ACVR1-activin A-type II receptor non-signaling complex (NSC) that renders receptors unavailable for engagement with BMPs, hence resulting in an apparent inhibition of ACVR1-mediated BMP signaling. Inhibin A is a dimer of alpha/INHA and beta-A/INHBA that functions as a feedback regulator in the hypothalamic-pituitary-gonadal (HPG) axis. Inhibits the secretion of FSH from the anterior pituitary gland by acting on pituitary gonadotrope cells. Antagonizes activin A by binding to the proteoglycan, betaglycan, and forming a stable complex with and, thereby, sequestering type II activin receptors while excluding type I receptor. The sequence is that of Inhibin beta A chain (INHBA) from Sus scrofa (Pig).